Here is a 901-residue protein sequence, read N- to C-terminus: Protein SOK1 (901 aa).

3 disordered regions span residues 1-87 (MDQP…QNII), 106-139 (RSSG…SDLK), and 162-231 (NDDN…NASN). A compositionally biased stretch (low complexity) spans 10 to 51 (PTTASNPAPSSTNSSSAPSATNSKQERSSSSLSKPSSVVPSK). 2 positions are modified to phosphoserine: serine 40 and serine 53. 2 stretches are compositionally biased toward polar residues: residues 74–87 (GDTS…QNII) and 106–115 (RSSGVITPSM). Residues 116-138 (SLNASTNATNNDSSGNSANSSDL) are compositionally biased toward low complexity. Serine 191 and serine 193 each carry phosphoserine. A compositionally biased stretch (polar residues) spans 220-231 (AAQQQPPGNASN). At serine 245 the chain carries Phosphoserine.

Belongs to the TCP11 family.

The protein localises to the nucleus. Functionally, high copy suppressor of a cyclic AMP-dependent protein kinase mutant. In Saccharomyces cerevisiae (strain ATCC 204508 / S288c) (Baker's yeast), this protein is Protein SOK1 (SOK1).